A 1062-amino-acid chain; its full sequence is Carbamoyl phosphate synthase large chain (1062 aa).

The interval M1 to E401 is carboxyphosphate synthetic domain. Residues R129, R169, G175, G176, K208, I210, E215, G241, I242, H243, Q284, and E298 each coordinate ATP. Residues K133–I327 form the ATP-grasp 1 domain. Mg(2+)-binding residues include Q284, E298, and N300. Positions 284, 298, and 300 each coordinate Mn(2+). The tract at residues I402–S546 is oligomerization domain. The tract at residues R547–K929 is carbamoyl phosphate synthetic domain. The region spanning D671 to M861 is the ATP-grasp 2 domain. Residues R707, D746, L748, E752, G777, V778, H779, S780, Q820, and E832 each contribute to the ATP site. Residues Q820, E832, and N834 each coordinate Mg(2+). Mn(2+) is bound by residues Q820, E832, and N834. The 133-residue stretch at M930–K1062 folds into the MGS-like domain. Residues M930–K1062 are allosteric domain.

This sequence belongs to the CarB family. Composed of two chains; the small (or glutamine) chain promotes the hydrolysis of glutamine to ammonia, which is used by the large (or ammonia) chain to synthesize carbamoyl phosphate. Tetramer of heterodimers (alpha,beta)4. Mg(2+) is required as a cofactor. Mn(2+) serves as cofactor.

The enzyme catalyses hydrogencarbonate + L-glutamine + 2 ATP + H2O = carbamoyl phosphate + L-glutamate + 2 ADP + phosphate + 2 H(+). It carries out the reaction hydrogencarbonate + NH4(+) + 2 ATP = carbamoyl phosphate + 2 ADP + phosphate + 2 H(+). Its pathway is amino-acid biosynthesis; L-arginine biosynthesis; carbamoyl phosphate from bicarbonate: step 1/1. It participates in pyrimidine metabolism; UMP biosynthesis via de novo pathway; (S)-dihydroorotate from bicarbonate: step 1/3. Large subunit of the glutamine-dependent carbamoyl phosphate synthetase (CPSase). CPSase catalyzes the formation of carbamoyl phosphate from the ammonia moiety of glutamine, carbonate, and phosphate donated by ATP, constituting the first step of 2 biosynthetic pathways, one leading to arginine and/or urea and the other to pyrimidine nucleotides. The large subunit (synthetase) binds the substrates ammonia (free or transferred from glutamine from the small subunit), hydrogencarbonate and ATP and carries out an ATP-coupled ligase reaction, activating hydrogencarbonate by forming carboxy phosphate which reacts with ammonia to form carbamoyl phosphate. In Lactobacillus helveticus (strain DPC 4571), this protein is Carbamoyl phosphate synthase large chain.